We begin with the raw amino-acid sequence, 260 residues long: 14-3-3-like protein GF14-F (260 aa).

The interval 241–260 (NAEDGGDEIKEAAKPEGEGH) is disordered. Positions 247 to 260 (DEIKEAAKPEGEGH) are enriched in basic and acidic residues.

It belongs to the 14-3-3 family. In terms of assembly, may form a complex with the transcriptional activator VP1 and the bZIP transcription factor EMBP1. In terms of tissue distribution, expressed in seedlings, roots and panicles and at lower levels in flag leaves and internodes.

The protein localises to the cytoplasm. Its subcellular location is the nucleus. Functionally, is associated with a DNA binding complex that binds to the G box, a well-characterized cis-acting DNA regulatory element found in plant genes. The polypeptide is 14-3-3-like protein GF14-F (GF14F) (Oryza sativa subsp. japonica (Rice)).